A 406-amino-acid polypeptide reads, in one-letter code: Protein translocase subunit SecD (406 aa).

6 consecutive transmembrane segments (helical) span residues I8–N28, M240–A260, F262–I282, P289–F309, F334–F354, and G361–T381.

It belongs to the SecD/SecF family. SecD subfamily. In terms of assembly, forms a complex with SecF. Part of the essential Sec protein translocation apparatus which comprises SecA, SecYEG and auxiliary proteins SecDF. Other proteins may also be involved.

The protein localises to the cell inner membrane. Part of the Sec protein translocase complex. Interacts with the SecYEG preprotein conducting channel. SecDF uses the proton motive force (PMF) to complete protein translocation after the ATP-dependent function of SecA. In Sebaldella termitidis (strain ATCC 33386 / NCTC 11300), this protein is Protein translocase subunit SecD.